Here is a 157-residue protein sequence, read N- to C-terminus: WPP domain-containing protein 3 (157 aa).

Residues 1–20 are compositionally biased toward polar residues; that stretch reads MAETADTINTTVSTPQPQLE. Positions 1–41 are disordered; it reads MAETADTINTTVSTPQPQLESRSDETSCLQKHRSDATSEVT. The segment covering 32-41 has biased composition (basic and acidic residues); that stretch reads HRSDATSEVT. Positions 37–138 are WPP; degenerate; the sequence is TSEVTKEEKS…IESAEVRFKA (102 aa).

Expressed in roots, stems and leaves.

The protein localises to the cytoplasm. It is found in the nucleus. Functionally, regulates the mitotic activity in roots. The sequence is that of WPP domain-containing protein 3 (WPP3) from Arabidopsis thaliana (Mouse-ear cress).